The following is a 311-amino-acid chain: MKVAVIGAAGGIGQALALLLKNRLPAGSDLALYDIAPVTPGVAADLSHIPTPVTIKGYAGEDPTPALEGADVVLVSAGVARKPGMDRADLFNVNAGIVKALAEKIAVVCPKACVGIITNPVNTTVPIAAEVLKKAGVYDKRKLFGVTTLDVIRSETFVAALKDKDPGQVRVPVIGGHSGVTILPLLSQVEGVSFTDEEVAALTKRIQNAGTEVVEAKAGGGSATLSMGQAACRFGLALVKALQGESDVVEYAYVEGEGEYAPFFAQPIKLGKNGVEALLDIGKLSAYEQAALDGMLDTLKGDIQIGVEFVK.

NAD(+) contacts are provided by residues 7–13 (GAAGGIG) and D34. Substrate is bound by residues R81 and R87. NAD(+)-binding positions include N94 and 117–119 (ITN). The substrate site is built by N119 and R153. Residue H177 is the Proton acceptor of the active site. M227 provides a ligand contact to NAD(+).

The protein belongs to the LDH/MDH superfamily. MDH type 1 family. As to quaternary structure, homodimer.

It catalyses the reaction (S)-malate + NAD(+) = oxaloacetate + NADH + H(+). Functionally, catalyzes the reversible oxidation of malate to oxaloacetate. The chain is Malate dehydrogenase (mdh) from Vibrio cholerae serotype O1 (strain ATCC 39315 / El Tor Inaba N16961).